The following is an 861-amino-acid chain: Ribosome biogenesis protein BOP1 homolog (861 aa).

A disordered region spans residues Met-1–Arg-237. A compositionally biased stretch (polar residues) spans Asn-29–Ser-45. Composition is skewed to acidic residues over residues Asp-62–Asp-77 and Ser-87–Ala-143. 3 stretches are compositionally biased toward basic and acidic residues: residues Glu-144–Lys-156, Glu-174–Ala-190, and Pro-212–Asp-223. WD repeat units follow at residues Gly-522–Thr-561, Pro-563–Ser-603, Lys-692–Lys-730, Pro-733–Gln-772, Leu-776–Gln-815, and Val-831–Thr-861.

It belongs to the WD repeat BOP1/ERB1 family.

It is found in the nucleus. Its subcellular location is the nucleolus. The protein localises to the nucleoplasm. Required for maturation of ribosomal RNAs and formation of the large ribosomal subunit. This is Ribosome biogenesis protein BOP1 homolog from Culex quinquefasciatus (Southern house mosquito).